The sequence spans 202 residues: NADH-quinone oxidoreductase subunit C (202 aa).

Belongs to the complex I 30 kDa subunit family. In terms of assembly, NDH-1 is composed of 14 different subunits. Subunits NuoB, C, D, E, F, and G constitute the peripheral sector of the complex.

Its subcellular location is the cell inner membrane. It catalyses the reaction a quinone + NADH + 5 H(+)(in) = a quinol + NAD(+) + 4 H(+)(out). In terms of biological role, NDH-1 shuttles electrons from NADH, via FMN and iron-sulfur (Fe-S) centers, to quinones in the respiratory chain. The immediate electron acceptor for the enzyme in this species is believed to be ubiquinone. Couples the redox reaction to proton translocation (for every two electrons transferred, four hydrogen ions are translocated across the cytoplasmic membrane), and thus conserves the redox energy in a proton gradient. This is NADH-quinone oxidoreductase subunit C from Paracidovorax citrulli (strain AAC00-1) (Acidovorax citrulli).